Here is a 399-residue protein sequence, read N- to C-terminus: Elongation factor Tu (399 aa).

Residues 10–204 (KPHVNIGTIG…AVDASIPEPE (195 aa)) form the tr-type G domain. Residues 19–26 (GHVDHGKT) are G1. 19–26 (GHVDHGKT) contributes to the GTP binding site. Thr-26 lines the Mg(2+) pocket. Positions 60–64 (GITIN) are G2. Positions 81-84 (DCPG) are G3. GTP contacts are provided by residues 81-85 (DCPGH) and 136-139 (NKCD). Residues 136–139 (NKCD) form a G4 region. Residues 174–176 (SGL) are G5.

Belongs to the TRAFAC class translation factor GTPase superfamily. Classic translation factor GTPase family. EF-Tu/EF-1A subfamily. Monomer.

It localises to the cytoplasm. It carries out the reaction GTP + H2O = GDP + phosphate + H(+). Functionally, GTP hydrolase that promotes the GTP-dependent binding of aminoacyl-tRNA to the A-site of ribosomes during protein biosynthesis. This chain is Elongation factor Tu, found in Prochlorococcus marinus (strain MIT 9313).